We begin with the raw amino-acid sequence, 446 residues long: Coagulation factor VII (446 aa).

An N-terminal signal peptide occupies residues 1 to 24 (MVPQAHGLLLLCFLLQLQGPLGTA). A propeptide spanning residues 25 to 41 (VFITQEEAHGVLHRQRR) is cleaved from the precursor. Positions 42–86 (ANSLLEELWPGSLERECNEEQCSFEEAREIFKSPERTKQFWIVYS) constitute a Gla domain. 4-carboxyglutamate occurs at positions 47, 48, 55, 57, 60, 61, 66, 67, 70, and 76. Residues Cys-58 and Cys-63 are joined by a disulfide bond. In terms of domain architecture, EGF-like 1; calcium-binding spans 87-123 (DGDQCASNPCQNGGTCQDHLKSYVCFCLLDFEGRNCE). Cystine bridges form between Cys-91-Cys-102, Cys-96-Cys-111, Cys-113-Cys-122, Cys-132-Cys-143, Cys-139-Cys-153, Cys-155-Cys-168, Cys-176-Cys-303, Cys-200-Cys-205, Cys-219-Cys-235, and Cys-351-Cys-370. An O-linked (Glc...) serine; alternate glycan is attached at Ser-93. Residue Ser-93 is glycosylated (O-linked (Xyl...) serine; alternate). Asp-104 carries the post-translational modification (3R)-3-hydroxyaspartate. The EGF-like 2 domain maps to 128-169 (EQLICANENGDCDQYCRDHVGTKRTCSCHEDYTLQPDEVSCK). The N-linked (GlcNAc...) asparagine glycan is linked to Asn-186. Residues 194–433 (IVGGNVCPKG…YIDWLVRHMD (240 aa)) form the Peptidase S1 domain. Catalysis depends on His-234, which acts as the Charge relay system. Asn-244 carries N-linked (GlcNAc...) asparagine glycosylation. The active-site Charge relay system is Asp-283. Asp-379 lines the substrate pocket. A disulfide bridge links Cys-381 with Cys-409. Catalysis depends on Ser-385, which acts as the Charge relay system.

This sequence belongs to the peptidase S1 family. As to quaternary structure, heterodimer of a light chain and a heavy chain linked by a disulfide bond. In terms of processing, the vitamin K-dependent, enzymatic carboxylation of some glutamate residues allows the modified protein to bind calcium. Post-translationally, the iron and 2-oxoglutarate dependent 3-hydroxylation of aspartate and asparagine is (R) stereospecific within EGF domains. Can be either O-glucosylated or O-xylosylated at Ser-93 by POGLUT1. Plasma and liver.

The protein localises to the secreted. The enzyme catalyses Selective cleavage of Arg-|-Ile bond in factor X to form factor Xa.. In terms of biological role, initiates the extrinsic pathway of blood coagulation. Serine protease that circulates in the blood in a zymogen form. Factor VII is converted to factor VIIa by factor Xa, factor XIIa, factor IXa, or thrombin by minor proteolysis. In the presence of tissue factor and calcium ions, factor VIIa then converts factor X to factor Xa by limited proteolysis. Factor VIIa also converts factor IX to factor IXa in the presence of tissue factor and calcium. In Mus musculus (Mouse), this protein is Coagulation factor VII (F7).